Reading from the N-terminus, the 187-residue chain is ATP synthase subunit delta, chloroplastic (187 aa).

This sequence belongs to the ATPase delta chain family. As to quaternary structure, F-type ATPases have 2 components, F(1) - the catalytic core - and F(0) - the membrane proton channel. F(1) has five subunits: alpha(3), beta(3), gamma(1), delta(1), epsilon(1). CF(0) has four main subunits: a(1), b(1), b'(1) and c(10-14). The alpha and beta chains form an alternating ring which encloses part of the gamma chain. F(1) is attached to F(0) by a central stalk formed by the gamma and epsilon chains, while a peripheral stalk is formed by the delta, b and b' chains.

Its subcellular location is the plastid. It is found in the chloroplast thylakoid membrane. In terms of biological role, f(1)F(0) ATP synthase produces ATP from ADP in the presence of a proton or sodium gradient. F-type ATPases consist of two structural domains, F(1) containing the extramembraneous catalytic core and F(0) containing the membrane proton channel, linked together by a central stalk and a peripheral stalk. During catalysis, ATP synthesis in the catalytic domain of F(1) is coupled via a rotary mechanism of the central stalk subunits to proton translocation. Its function is as follows. This protein is part of the stalk that links CF(0) to CF(1). It either transmits conformational changes from CF(0) to CF(1) or is implicated in proton conduction. This chain is ATP synthase subunit delta, chloroplastic, found in Trieres chinensis (Marine centric diatom).